Here is a 177-residue protein sequence, read N- to C-terminus: ATP-dependent protease subunit HslV (177 aa).

Threonine 7 is a catalytic residue. Na(+)-binding residues include glycine 162, cysteine 165, and threonine 168.

Belongs to the peptidase T1B family. HslV subfamily. In terms of assembly, a double ring-shaped homohexamer of HslV is capped on each side by a ring-shaped HslU homohexamer. The assembly of the HslU/HslV complex is dependent on binding of ATP.

The protein resides in the cytoplasm. It catalyses the reaction ATP-dependent cleavage of peptide bonds with broad specificity.. Allosterically activated by HslU binding. Its function is as follows. Protease subunit of a proteasome-like degradation complex believed to be a general protein degrading machinery. This chain is ATP-dependent protease subunit HslV, found in Persephonella marina (strain DSM 14350 / EX-H1).